Reading from the N-terminus, the 310-residue chain is Protein FIP2 (310 aa).

The disordered stretch occupies residues 1-58 (MGFAPVTPAAVETYDPDVDHDDESNGLDGFRVRSKRSGKFSGGYSDSPREVGDGYGVR). Acidic residues predominate over residues 14 to 25 (YDPDVDHDDESN). Phosphoserine is present on residues serine 77 and serine 105. Disordered stretches follow at residues 115 to 135 (ATRLRTHGKPSSGDFSHGSGG), 152 to 171 (FKPKNFSKPEPNFSQDLDYD), and 177 to 221 (DRAE…GSSS). Residues 208 to 221 (PRNTGASNGYGSSS) show a composition bias toward polar residues.

In terms of assembly, interacts with FRI. Interacts with WAV3.

The polypeptide is Protein FIP2 (Arabidopsis thaliana (Mouse-ear cress)).